Reading from the N-terminus, the 534-residue chain is uncharacterized protein (534 aa).

Disordered regions lie at residues 1-93 (MSSS…DDTG), 123-260 (SPES…LSSA), 313-349 (AAAT…TFPS), and 383-505 (PWGA…QGCP). The segment covering 35-45 (GPGPDPGPEPG) has biased composition (pro residues). 2 positions are modified to phosphoserine: Ser87 and Ser123. Residues 145–161 (RGAAAQRCGEAARAEAG) show a composition bias toward low complexity. Residues 230 to 239 (SPKDPRDTPR) show a composition bias toward basic and acidic residues.

This is an uncharacterized protein from Bos taurus (Bovine).